Consider the following 83-residue polypeptide: Protein midgut expression 1 (83 aa).

Endoderm-specific pattern of expression during embryogenesis; anterior and posterior midgut primordia.

Involved in morphogenesis and development. This Drosophila melanogaster (Fruit fly) protein is Protein midgut expression 1 (mex1).